We begin with the raw amino-acid sequence, 23 residues long: Septenin 2b (23 aa).

In terms of tissue distribution, expressed in skin glands.

The protein resides in the secreted. Functionally, may act as an antimicrobial peptide. This Osteopilus septentrionalis (Cuban treefrog) protein is Septenin 2b.